We begin with the raw amino-acid sequence, 177 residues long: Shikimate kinase (177 aa).

17–22 contacts ATP; sequence GAGKST. Residue S21 participates in Mg(2+) binding. Residues D39, R63, and G85 each coordinate substrate. R123 is an ATP binding site. Substrate is bound at residue R142. R160 provides a ligand contact to ATP.

It belongs to the shikimate kinase family. As to quaternary structure, monomer. Mg(2+) serves as cofactor.

It localises to the cytoplasm. The catalysed reaction is shikimate + ATP = 3-phosphoshikimate + ADP + H(+). It participates in metabolic intermediate biosynthesis; chorismate biosynthesis; chorismate from D-erythrose 4-phosphate and phosphoenolpyruvate: step 5/7. Catalyzes the specific phosphorylation of the 3-hydroxyl group of shikimic acid using ATP as a cosubstrate. This is Shikimate kinase from Halorhodospira halophila (strain DSM 244 / SL1) (Ectothiorhodospira halophila (strain DSM 244 / SL1)).